Here is a 72-residue protein sequence, read N- to C-terminus: Translational regulator CsrA (72 aa).

The protein belongs to the CsrA/RsmA family. As to quaternary structure, homodimer; the beta-strands of each monomer intercalate to form a hydrophobic core, while the alpha-helices form wings that extend away from the core.

The protein resides in the cytoplasm. Its function is as follows. A translational regulator that binds mRNA to regulate translation initiation and/or mRNA stability. Usually binds in the 5'-UTR at or near the Shine-Dalgarno sequence preventing ribosome-binding, thus repressing translation. Its main target seems to be the major flagellin gene, while its function is anatagonized by FliW. The polypeptide is Translational regulator CsrA (Clostridium botulinum (strain Loch Maree / Type A3)).